Consider the following 566-residue polypeptide: Arginine--tRNA ligase (566 aa).

Residues 124 to 134 (ANPNGPLHIGH) carry the 'HIGH' region motif.

The protein belongs to the class-I aminoacyl-tRNA synthetase family.

Its subcellular location is the cytoplasm. It carries out the reaction tRNA(Arg) + L-arginine + ATP = L-arginyl-tRNA(Arg) + AMP + diphosphate. The chain is Arginine--tRNA ligase (argS) from Methanocaldococcus jannaschii (strain ATCC 43067 / DSM 2661 / JAL-1 / JCM 10045 / NBRC 100440) (Methanococcus jannaschii).